A 448-amino-acid chain; its full sequence is Glutamate--tRNA ligase 1 (448 aa).

The 'HIGH' region motif lies at 10–20 (PSPTGMLHVGN). The 'KMSKS' region signature appears at 240–244 (KISKR). Residue Lys243 coordinates ATP.

This sequence belongs to the class-I aminoacyl-tRNA synthetase family. Glutamate--tRNA ligase type 1 subfamily. Monomer.

Its subcellular location is the cytoplasm. It catalyses the reaction tRNA(Glu) + L-glutamate + ATP = L-glutamyl-tRNA(Glu) + AMP + diphosphate. Its function is as follows. Catalyzes the attachment of glutamate to tRNA(Glu) in a two-step reaction: glutamate is first activated by ATP to form Glu-AMP and then transferred to the acceptor end of tRNA(Glu). The sequence is that of Glutamate--tRNA ligase 1 from Rickettsia typhi (strain ATCC VR-144 / Wilmington).